The sequence spans 487 residues: Betaine aldehyde dehydrogenase (487 aa).

Ile-27 and Asp-93 together coordinate K(+). 149–151 (GAW) lines the NAD(+) pocket. Lys-161 (charge relay system) is an active-site residue. Residues 175–178 (KPSE) and 228–231 (SVPT) each bind NAD(+). Residue Leu-243 coordinates K(+). Catalysis depends on Glu-249, which acts as the Proton acceptor. The NAD(+) site is built by Gly-251, Cys-283, and Glu-384. The Nucleophile role is filled by Cys-283. Cys-283 carries the post-translational modification Cysteine sulfenic acid (-SOH). Positions 454 and 457 each coordinate K(+). Glu-461 acts as the Charge relay system in catalysis.

The protein belongs to the aldehyde dehydrogenase family. In terms of assembly, dimer of dimers. K(+) is required as a cofactor.

The catalysed reaction is betaine aldehyde + NAD(+) + H2O = glycine betaine + NADH + 2 H(+). It functions in the pathway amine and polyamine biosynthesis; betaine biosynthesis via choline pathway; betaine from betaine aldehyde: step 1/1. Its function is as follows. Involved in the biosynthesis of the osmoprotectant glycine betaine. Catalyzes the irreversible oxidation of betaine aldehyde to the corresponding acid. This Brucella canis (strain ATCC 23365 / NCTC 10854 / RM-666) protein is Betaine aldehyde dehydrogenase.